Consider the following 908-residue polypeptide: NADH-quinone oxidoreductase subunit G (908 aa).

The region spanning 2–83 (ATIHVDGKEY…GTFISIDDEE (82 aa)) is the 2Fe-2S ferredoxin-type domain. Residues C34, C45, C48, and C67 each contribute to the [2Fe-2S] cluster site. One can recognise a 4Fe-4S His(Cys)3-ligated-type domain in the interval 83–122 (EAKQFRESVVEWLMTNHPHDCPVCEEGGNCHLQDMTVMTG). Positions 99, 103, 106, 112, 151, 154, 157, 201, 228, 231, 235, and 263 each coordinate [4Fe-4S] cluster. The 4Fe-4S Mo/W bis-MGD-type domain maps to 221–277 (MQFAPSICQQCSIGCNISPGERYGELRRIENRYNGTVNHYFLCDRGRFGYGYVNLKD).

The protein belongs to the complex I 75 kDa subunit family. As to quaternary structure, composed of 13 different subunits. Subunits NuoCD, E, F, and G constitute the peripheral sector of the complex. It depends on [2Fe-2S] cluster as a cofactor. The cofactor is [4Fe-4S] cluster.

The catalysed reaction is a quinone + NADH + 5 H(+)(in) = a quinol + NAD(+) + 4 H(+)(out). In terms of biological role, NDH-1 shuttles electrons from NADH, via FMN and iron-sulfur (Fe-S) centers, to quinones in the respiratory chain. The immediate electron acceptor for the enzyme in this species is believed to be ubiquinone. Couples the redox reaction to proton translocation (for every two electrons transferred, four hydrogen ions are translocated across the cytoplasmic membrane), and thus conserves the redox energy in a proton gradient. In Escherichia coli O157:H7, this protein is NADH-quinone oxidoreductase subunit G (nuoG).